The following is a 20-amino-acid chain: Pregnancy-associated glycoprotein 73B (20 aa).

This sequence belongs to the peptidase A1 family. N-glycosylated. In terms of tissue distribution, expressed in chorionic epithelium (trophectoderm).

Its subcellular location is the secreted. It is found in the extracellular space. The chain is Pregnancy-associated glycoprotein 73B from Bubalus bubalis (Domestic water buffalo).